The primary structure comprises 660 residues: Acetyl-coenzyme A synthetase (660 aa).

Residues 197 to 200 and Thr317 each bind CoA; that span reads RGGK. ATP is bound by residues 397–399, 421–426, Asp512, and Arg528; these read GEP and DTFWQT. Residue Ser536 participates in CoA binding. Residue Arg539 coordinates ATP. Mg(2+) contacts are provided by Val550 and Val555. Lys625 is subject to N6-acetyllysine.

It belongs to the ATP-dependent AMP-binding enzyme family. Mg(2+) is required as a cofactor. Acetylated. Deacetylation by the SIR2-homolog deacetylase activates the enzyme.

It carries out the reaction acetate + ATP + CoA = acetyl-CoA + AMP + diphosphate. Functionally, catalyzes the conversion of acetate into acetyl-CoA (AcCoA), an essential intermediate at the junction of anabolic and catabolic pathways. AcsA undergoes a two-step reaction. In the first half reaction, AcsA combines acetate with ATP to form acetyl-adenylate (AcAMP) intermediate. In the second half reaction, it can then transfer the acetyl group from AcAMP to the sulfhydryl group of CoA, forming the product AcCoA. This is Acetyl-coenzyme A synthetase from Cupriavidus taiwanensis (strain DSM 17343 / BCRC 17206 / CCUG 44338 / CIP 107171 / LMG 19424 / R1) (Ralstonia taiwanensis (strain LMG 19424)).